The sequence spans 347 residues: Phosphate acyltransferase (347 aa).

The protein belongs to the PlsX family. As to quaternary structure, homodimer. Probably interacts with PlsY.

The protein resides in the cytoplasm. It catalyses the reaction a fatty acyl-[ACP] + phosphate = an acyl phosphate + holo-[ACP]. Its pathway is lipid metabolism; phospholipid metabolism. Its function is as follows. Catalyzes the reversible formation of acyl-phosphate (acyl-PO(4)) from acyl-[acyl-carrier-protein] (acyl-ACP). This enzyme utilizes acyl-ACP as fatty acyl donor, but not acyl-CoA. This Sinorhizobium fredii (strain NBRC 101917 / NGR234) protein is Phosphate acyltransferase.